The chain runs to 202 residues: Probable cytochrome c oxidase subunit 3 (202 aa).

5 helical membrane-spanning segments follow: residues 30–50 (VVWL…YFTA), 69–89 (AVPV…GVFS), 101–121 (WYVI…YEYY), 141–161 (LATG…IFLL), and 178–198 (IVVS…FTVI).

Belongs to the cytochrome c oxidase subunit 3 family.

It localises to the cell membrane. The enzyme catalyses 4 Fe(II)-[cytochrome c] + O2 + 8 H(+)(in) = 4 Fe(III)-[cytochrome c] + 2 H2O + 4 H(+)(out). This is Probable cytochrome c oxidase subunit 3 (ctaE) from Mycobacterium leprae (strain TN).